Reading from the N-terminus, the 117-residue chain is Biofilm growth-associated repressor (117 aa).

An HTH arsR-type domain is found at 20–114; sequence AMEKRATEVA…ALYAIFCAPE (95 aa). Positions 54 to 77 form a DNA-binding region, H-T-H motif; that stretch reads VGELEAKLDIRQPTLSQQLGVLRE.

Its function is as follows. Represses an operon that comprises at least itself and blh. Binds to a palindromic AT-rich sequence spanning the -10 region of the blh promoter and blocks transcription of the operon. The chain is Biofilm growth-associated repressor (bigR) from Agrobacterium fabrum (strain C58 / ATCC 33970) (Agrobacterium tumefaciens (strain C58)).